Reading from the N-terminus, the 123-residue chain is Ribosome-binding factor A (123 aa).

Belongs to the RbfA family. As to quaternary structure, monomer. Binds 30S ribosomal subunits, but not 50S ribosomal subunits or 70S ribosomes.

The protein resides in the cytoplasm. In terms of biological role, one of several proteins that assist in the late maturation steps of the functional core of the 30S ribosomal subunit. Associates with free 30S ribosomal subunits (but not with 30S subunits that are part of 70S ribosomes or polysomes). Required for efficient processing of 16S rRNA. May interact with the 5'-terminal helix region of 16S rRNA. In Neisseria meningitidis serogroup B (strain ATCC BAA-335 / MC58), this protein is Ribosome-binding factor A.